Consider the following 446-residue polypeptide: N-succinylarginine dihydrolase (446 aa).

Residues 19 to 28, Asn110, and 137 to 138 each bind substrate; these read AGLSFGNVAS and HR. Glu174 is a catalytic residue. A substrate-binding site is contributed by Arg213. His249 is a catalytic residue. Substrate-binding residues include Asp251 and Asn364. Cys370 (nucleophile) is an active-site residue.

This sequence belongs to the succinylarginine dihydrolase family. In terms of assembly, homodimer.

It carries out the reaction N(2)-succinyl-L-arginine + 2 H2O + 2 H(+) = N(2)-succinyl-L-ornithine + 2 NH4(+) + CO2. The protein operates within amino-acid degradation; L-arginine degradation via AST pathway; L-glutamate and succinate from L-arginine: step 2/5. Catalyzes the hydrolysis of N(2)-succinylarginine into N(2)-succinylornithine, ammonia and CO(2). This Burkholderia thailandensis (strain ATCC 700388 / DSM 13276 / CCUG 48851 / CIP 106301 / E264) protein is N-succinylarginine dihydrolase.